The sequence spans 2599 residues: Protein DOP1 homolog (2599 aa).

Disordered stretches follow at residues 532 to 571 and 595 to 701; these read EQSGGSSSDEKITMNSASDAGKTEAGAQGNSLEKSKSDSR and ASNQ…LDEE. Polar residues-rich tracts occupy residues 534–549, 595–604, and 625–636; these read SGGSSSDEKITMNSAS, ASNQSVGRQS, and ASDTGQQSSSDL. Residue S753 is modified to Phosphoserine. A compositionally biased stretch (basic and acidic residues) spans 1240–1251; that stretch reads PRIEIPHKETPL. Disordered regions lie at residues 1240–1316 and 1347–1368; these read PRIE…SSSA and TYRLTREKTPGENSLNSLEQKD. Residues 1264–1282 show a composition bias toward polar residues; that stretch reads QPSQEQPANQPDNSLQYDQ. Residues 1297-1309 show a composition bias toward basic and acidic residues; that stretch reads SELRETSIEKEDS. Residue T1355 is modified to Phosphothreonine. Phosphoserine occurs at positions 1360, 1363, and 1371. Residues 1409–1442 are disordered; that stretch reads CISKTSTDSNISGSHVEQPEQEEETEPGTESTIN. Residues 1410 to 1423 show a composition bias toward polar residues; it reads ISKTSTDSNISGSH. Residue S2525 is modified to Phosphoserine.

Belongs to the DOP1 family.

Its subcellular location is the golgi apparatus membrane. Functionally, may be involved in protein traffic between late Golgi and early endosomes. This Drosophila melanogaster (Fruit fly) protein is Protein DOP1 homolog.